The chain runs to 200 residues: NAD(P)H-quinone oxidoreductase subunit 6, chloroplastic (200 aa).

The next 5 membrane-spanning stretches (helical) occupy residues 13-33, 35-55, 64-84, 102-122, and 156-176; these read IIFFILEIGVILGSLGVVLLS, IVYSAFFLGLVFFCISLLYFA, AQILIYVGAVNVLIVFAVMLI, ITLAICLTSFFLLVNIILNTS, and LLPFELLSIVLLVALIGAIVI.

The protein belongs to the complex I subunit 6 family. In terms of assembly, NDH is composed of at least 16 different subunits, 5 of which are encoded in the nucleus.

It localises to the plastid. Its subcellular location is the chloroplast thylakoid membrane. The enzyme catalyses a plastoquinone + NADH + (n+1) H(+)(in) = a plastoquinol + NAD(+) + n H(+)(out). It carries out the reaction a plastoquinone + NADPH + (n+1) H(+)(in) = a plastoquinol + NADP(+) + n H(+)(out). Functionally, NDH shuttles electrons from NAD(P)H:plastoquinone, via FMN and iron-sulfur (Fe-S) centers, to quinones in the photosynthetic chain and possibly in a chloroplast respiratory chain. The immediate electron acceptor for the enzyme in this species is believed to be plastoquinone. Couples the redox reaction to proton translocation, and thus conserves the redox energy in a proton gradient. The polypeptide is NAD(P)H-quinone oxidoreductase subunit 6, chloroplastic (ndhG) (Physcomitrium patens (Spreading-leaved earth moss)).